The primary structure comprises 74 residues: Large ribosomal subunit protein uL29 (74 aa).

Belongs to the universal ribosomal protein uL29 family.

This chain is Large ribosomal subunit protein uL29, found in Nostoc sp. (strain PCC 7120 / SAG 25.82 / UTEX 2576).